Here is a 337-residue protein sequence, read N- to C-terminus: MNGLGGLNKSEHGVVIGLVQLQLPVVVTKEDLAKQTEKIVWMVGKARRNLGTMDLVVFPEYSLHGLSMDTNPEIMCRLDGPEVAAFKQACIDNKIWGCFSIMEYNPDGNPYNSGLIIDSNGEIKLYYRKLHPWIPVEPWEPGDLGIPVIEGPRGAKIALIICHDGMFPEMARECAYKGAEIMIRTAGYTAPIRDSWRFTNQANAFQNLMVTANVCMCGSDGSFDSMGEGMIVNFDGSILAHGTTGRADEIITAEVRPDLVREARIGWGVENNIYQLWHRGYVAVKGGAMDCPYTFMHDMVAGTYRLPWEDQVKITDGTSCGFPAPTRVFGKMAKAAE.

Residues 14-257 (VVIGLVQLQL…DEIITAEVRP (244 aa)) form the CN hydrolase domain. Glutamate 60 acts as the Proton acceptor in catalysis. Residue lysine 129 is the Proton donor of the active site. Cysteine 162 acts as the Nucleophile in catalysis.

It belongs to the carbon-nitrogen hydrolase superfamily. Aliphatic amidase family.

The catalysed reaction is formamide + H2O = formate + NH4(+). In terms of biological role, is an aliphatic amidase with a restricted substrate specificity, as it only hydrolyzes formamide. The sequence is that of Formamidase from Bradyrhizobium sp. (strain ORS 278).